A 512-amino-acid polypeptide reads, in one-letter code: Spermatocyte protein spe-8 (512 aa).

The disordered stretch occupies residues 1–85 (MRSKSSEGDL…PKPSSDNNNS (85 aa)). The span at 15-41 (TQSREDKETTATYSEDTKPETQKERNA) shows a compositional bias: basic and acidic residues. Residues 68 to 78 (EAPPPPPPPKP) are compositionally biased toward pro residues. The 92-residue stretch at 114–205 (FYHGFMGRNE…YEGMTLICGL (92 aa)) folds into the SH2 domain. The 269-residue stretch at 217-485 (VTLNKKLGEG…KEEVGFHEIE (269 aa)) folds into the Protein kinase domain. ATP-binding positions include 223 to 231 (LGEGQFGEV) and lysine 250. Aspartate 344 functions as the Proton acceptor in the catalytic mechanism.

Belongs to the protein kinase superfamily. Tyr protein kinase family. Fes/fps subfamily. In terms of tissue distribution, expression is restricted to male germline.

Its subcellular location is the cell membrane. The protein resides in the cytoplasm. The catalysed reaction is L-tyrosyl-[protein] + ATP = O-phospho-L-tyrosyl-[protein] + ADP + H(+). Functionally, probable non-receptor tyrosine-protein kinase which plays a role in spermatid activation (spermiogenesis) in hermaphrodites. This Caenorhabditis elegans protein is Spermatocyte protein spe-8.